Reading from the N-terminus, the 224-residue chain is Charged multivesicular body protein 4b (224 aa).

A disordered region spans residues 1–23 (MSVFGKLFGAGGGKAGKGGPTPQ). N-acetylserine is present on serine 2. The intramolecular interaction with C-terminus stretch occupies residues 2-153 (SVFGKLFGAG…EISTAISKPV (152 aa)). Lysine 6 is modified (N6-acetyllysine). Positions 8 to 19 (FGAGGGKAGKGG) are enriched in gly residues. The stretch at 23–183 (QEAIQRLRDT…EELDKNLLEI (161 aa)) forms a coiled coil. Position 114 is an N6-acetyllysine (lysine 114). Residues 154–224 (GFGEEFDEDE…KELENWAGSM (71 aa)) are intramolecular interaction with N-terminus. Serine 184 and serine 223 each carry phosphoserine. A disordered region spans residues 185–224 (GPETVPLPNVPSVALPSKPAKKKEEEDDDMKELENWAGSM).

Belongs to the SNF7 family. As to quaternary structure, probable core component of the endosomal sorting required for transport complex III (ESCRT-III). ESCRT-III components are thought to multimerize to form a flat lattice on the perimeter membrane of the endosome. Several assembly forms of ESCRT-III may exist that interact and act sequentially. Interacts with CHMP6 and CHMP4C. Interacts with PDCD6IP; the interaction is direct. Interacts with VPS4A; the interaction is direct. Interacts with VPS4B; the interaction is direct. Interacts with CHMP7. Interacts with CFTR; the interaction requires misfolded CFTR. Interacts with PTPN23. Interacts with CC2D1B. In terms of processing, ISGylated. Isgylation weakens its interaction with VPS4A.

The protein resides in the cytoplasm. It localises to the cytosol. Its subcellular location is the late endosome membrane. The protein localises to the midbody. It is found in the nucleus envelope. In terms of biological role, probable core component of the endosomal sorting required for transport complex III (ESCRT-III) which is involved in multivesicular bodies (MVBs) formation and sorting of endosomal cargo proteins into MVBs. MVBs contain intraluminal vesicles (ILVs) that are generated by invagination and scission from the limiting membrane of the endosome and mostly are delivered to lysosomes enabling degradation of membrane proteins, such as stimulated growth factor receptors, lysosomal enzymes and lipids. The MVB pathway appears to require the sequential function of ESCRT-O, -I,-II and -III complexes. ESCRT-III proteins mostly dissociate from the invaginating membrane before the ILV is released. The ESCRT machinery also functions in topologically equivalent membrane fission events, such as the terminal stages of cytokinesis. Together with SPAST, the ESCRT-III complex promotes nuclear envelope sealing and mitotic spindle disassembly during late anaphase. Plays a role in the endosomal sorting pathway. ESCRT-III proteins are believed to mediate the necessary vesicle extrusion and/or membrane fission activities, possibly in conjunction with the AAA ATPase VPS4. When overexpressed, membrane-assembled circular arrays of CHMP4B filaments can promote or stabilize negative curvature and outward budding. CHMP4A/B/C are required for the exosomal release of SDCBP, CD63 and syndecan. Majority of the protein exists in a folded closed conformation. In Mus musculus (Mouse), this protein is Charged multivesicular body protein 4b (Chmp4b).